The chain runs to 543 residues: Chaperonin GroEL (543 aa).

Residues 30-33 (TLGP), Lys51, 87-91 (DGTTT), Gly415, 480-482 (DAA), and Asp496 each bind ATP.

This sequence belongs to the chaperonin (HSP60) family. As to quaternary structure, forms a cylinder of 14 subunits composed of two heptameric rings stacked back-to-back. Interacts with the co-chaperonin GroES.

The protein localises to the cytoplasm. The catalysed reaction is ATP + H2O + a folded polypeptide = ADP + phosphate + an unfolded polypeptide.. Together with its co-chaperonin GroES, plays an essential role in assisting protein folding. The GroEL-GroES system forms a nano-cage that allows encapsulation of the non-native substrate proteins and provides a physical environment optimized to promote and accelerate protein folding. The sequence is that of Chaperonin GroEL from Hydrogenobaculum sp. (strain Y04AAS1).